Here is a 101-residue protein sequence, read N- to C-terminus: Urease subunit gamma (101 aa).

Belongs to the urease gamma subunit family. As to quaternary structure, heterotrimer of UreA (gamma), UreB (beta) and UreC (alpha) subunits. Three heterotrimers associate to form the active enzyme.

The protein resides in the cytoplasm. The enzyme catalyses urea + 2 H2O + H(+) = hydrogencarbonate + 2 NH4(+). The protein operates within nitrogen metabolism; urea degradation; CO(2) and NH(3) from urea (urease route): step 1/1. The sequence is that of Urease subunit gamma from Ureaplasma urealyticum serovar 10 (strain ATCC 33699 / Western).